We begin with the raw amino-acid sequence, 37 residues long: Large ribosomal subunit protein bL36 (37 aa).

Belongs to the bacterial ribosomal protein bL36 family.

The sequence is that of Large ribosomal subunit protein bL36 from Synechococcus sp. (strain WH7803).